Consider the following 411-residue polypeptide: Corticotropin-releasing factor receptor 2 (411 aa).

Residues 1-19 constitute a signal peptide (not cleaved); sequence MDAALLLSLLEANCSLALA. Over 1-108 the chain is Extracellular; it reads MDAALLLSLL…EPILDDKQRK (108 aa). N-linked (GlcNAc...) asparagine glycosylation is found at Asn-13, Asn-41, Asn-74, Asn-86, and Asn-94. 3 cysteine pairs are disulfide-bonded: Cys-14/Cys-50, Cys-40/Cys-83, and Cys-64/Cys-98. The helical transmembrane segment at 109–139 threads the bilayer; it reads YDLHYRIALIVNYLGHCVSVVALVAAFLLFL. The Cytoplasmic segment spans residues 140–146; that stretch reads VLRSIRC. Residues 147–171 form a helical membrane-spanning segment; the sequence is LRNVIHWNLITTFILRNIAWFLLQL. At 172–185 the chain is on the extracellular side; sequence IDHEVHEGNEVWCR. Cys-184 and Cys-254 are disulfide-bonded. The chain crosses the membrane as a helical span at residues 186-214; the sequence is CITTIFNYFVVTNFFWMFVEGCYLHTAIV. The Cytoplasmic segment spans residues 215–221; the sequence is MTYSTEH. Residues 222-249 traverse the membrane as a helical segment; it reads LRKWLFLFIGWCIPCPIIIAWAVGKLYY. Over 250–265 the chain is Extracellular; the sequence is ENEQCWFGKEAGDLVD. Residues 266–291 traverse the membrane as a helical segment; the sequence is YIYQGPVMLVLLINFVFLFNIVRILM. Topologically, residues 292–302 are cytoplasmic; the sequence is TKLRASTTSET. A helical transmembrane segment spans residues 303–327; it reads IQYRKAVKATLVLLPLLGITYMLFF. Topologically, residues 328 to 334 are extracellular; the sequence is VNPGEDD. The helical transmembrane segment at 335-364 threads the bilayer; the sequence is LSQIVFIYFNSFLQSFQGFFVSVFYCFFNG. Residues 365 to 411 lie on the Cytoplasmic side of the membrane; it reads EVRAALRKRWHRWQDHHALRVPVARAMSIPTSPTRISFHSIKQTAAV.

The protein belongs to the G-protein coupled receptor 2 family. In terms of assembly, monomer. Interacts with CRF, UCN, UCN2 and UCN3. Post-translationally, a N-glycosylation site within the signal peptide impedes its proper cleavage and function. Highly expressed in the heart. Also expressed in lungs, skeletal muscle, gastrointestinal tract, epididymis, and brain.

It localises to the cell membrane. In terms of biological role, G-protein coupled receptor for CRH (corticotropin-releasing factor), UCN (urocortin), UCN2 and UCN3. Has high affinity for UCN. Ligand binding causes a conformation change that triggers signaling via guanine nucleotide-binding proteins (G proteins) and down-stream effectors, such as adenylate cyclase. Promotes the activation of adenylate cyclase, leading to increased intracellular cAMP levels. The chain is Corticotropin-releasing factor receptor 2 (Crhr2) from Mus musculus (Mouse).